The primary structure comprises 404 residues: Glucose-1-phosphate adenylyltransferase (404 aa).

Alpha-D-glucose 1-phosphate-binding positions include Tyr-99, Gly-164, 179 to 180 (EK), and Ser-197.

Belongs to the bacterial/plant glucose-1-phosphate adenylyltransferase family. As to quaternary structure, homotetramer.

The catalysed reaction is alpha-D-glucose 1-phosphate + ATP + H(+) = ADP-alpha-D-glucose + diphosphate. It participates in glycan biosynthesis; glycogen biosynthesis. Involved in the biosynthesis of ADP-glucose, a building block required for the elongation reactions to produce glycogen. Catalyzes the reaction between ATP and alpha-D-glucose 1-phosphate (G1P) to produce pyrophosphate and ADP-Glc. The protein is Glucose-1-phosphate adenylyltransferase of Rhodococcus erythropolis (strain PR4 / NBRC 100887).